A 392-amino-acid chain; its full sequence is GDP-mannose transporter (392 aa).

The disordered stretch occupies residues 1 to 40 (MANKRNEDIELGPAEGRGSTDKDPFLARRSSSQPNRPQQA). Over 1 to 55 (MANKRNEDIELGPAEGRGSTDKDPFLARRSSSQPNRPQQAGPFGGYFDKIDHSPG) the chain is Cytoplasmic. Residues 29–38 (RSSSQPNRPQ) show a composition bias toward polar residues. The chain crosses the membrane as a helical span at residues 56–76 (ASIIAYCLSSISMTVVNKYVV). Residues 77–80 (SGSE) are Lumenal-facing. A helical transmembrane segment spans residues 81–101 (WNLNFFYLAVQSLVCTAAILI). Topologically, residues 102–121 (CKQLGMFQNLAAFDSTKAKK) are cytoplasmic. Residues 122–144 (WFPISLLLVGMIYTSTKALQFLS) traverse the membrane as a helical segment. Residues 145–149 (VPVYT) are Lumenal-facing. The chain crosses the membrane as a helical span at residues 150–168 (IFKNLTIIVVAYGEVLWFG). At 169–174 (GSVTPM) the chain is on the cytoplasmic side. The helical transmembrane segment at 175-198 (ALLSFGLMVLSSVIAAWADIQAAV) threads the bilayer. At 199-213 (EGVGHTAEATDAIST) the chain is on the lumenal side. The chain crosses the membrane as a helical span at residues 214–234 (LNAGYAWMGMNVFCTAAYLLG). At 235-248 (MRKVIKKMNFKDYD) the chain is on the cytoplasmic side. The chain crosses the membrane as a helical span at residues 249–269 (TMFYNNLLTIPVLIVFSLLFE). Over 270–287 (DWSNDNLIKNFPVETRNS) the chain is Lumenal. The helical transmembrane segment at 288–308 (LFIGMIYSGLAAIFISYCSAW) threads the bilayer. Residues 309–316 (CIRVTSST) are Cytoplasmic-facing. A helical transmembrane segment spans residues 317–337 (TYSMVGALNKLPLAISGLIFF). Topologically, residues 338–342 (DAPVT) are lumenal. A helical transmembrane segment spans residues 343-361 (FGSVTAIFVGFVSGLVYTW). At 362-392 (SKTRQKVSQILPTTQPTMSASAASNRDAANA) the chain is on the cytoplasmic side.

It belongs to the TPT transporter family. SLC35D subfamily. Homooligomer.

It is found in the golgi apparatus membrane. The protein resides in the cytoplasmic vesicle membrane. The protein localises to the endoplasmic reticulum membrane. Involved in the import of GDP-mannose from the cytoplasm into the Golgi lumen. The polypeptide is GDP-mannose transporter (vrg-4) (Neurospora crassa (strain ATCC 24698 / 74-OR23-1A / CBS 708.71 / DSM 1257 / FGSC 987)).